The chain runs to 496 residues: MEPFLRKRLTFLSFFWDKIWPADESEEDIPRIQGHDDNPVPEQAAAVEPCSFPAPRARLFRALYDFTARCAEELSVSRGDRLYALKEEGDYIFAQRLSGPPSTGLVPVTYLAKATPEPPSDQPWYFSGISRAQAQQLLLSPANAPGAFLIRPSESSIGGYSLSVRAQAKVCHYRICMAPSGSLYLQEGQLFPSLDALLAYYKTNWKLIQNPLLQPCIPQIPLVQDEWERPRSEFVLRRKLGEGFFGEVWEGLWLGSIPVAVKVIKSADMKLADLTKEIEALKSLRHERLIRLHAICSLGEPVYIVTELMGKGNLQVYLGSSEGKALSLPHLLGFACQVAEGMSYLEERRVVHRDLAARNVLVGDDLTCKVADFGLARLLKDDVYSPSSGSKIPVKWTAPEAANYRVFSQKSDVWSFGILLYEVFTYGQCPYEGMTNHETLQQISRGYRLPRPAVCPAEVYVLMVECWKGSPEERPTFAILREKLNAINRRLHLGLT.

One can recognise an SH3 domain in the interval 55–116; the sequence is PRARLFRALY…PVTYLAKATP (62 aa). In terms of domain architecture, SH2 spans 124-216; that stretch reads WYFSGISRAQ…LIQNPLLQPC (93 aa). One can recognise a Protein kinase domain in the interval 234–495; the sequence is FVLRRKLGEG…AINRRLHLGL (262 aa). ATP contacts are provided by residues 240–248 and Lys-262; that span reads LGEGFFGEV. Catalysis depends on Asp-354, which acts as the Proton acceptor. Residue Tyr-384 is modified to Phosphotyrosine; by autocatalysis.

It belongs to the protein kinase superfamily. Tyr protein kinase family. SRC subfamily. Interacts (via the SH2 and SH3 domains) with DOK1. Interacts with KHDRBS1/SAM68 and VIM. In terms of tissue distribution, higher expression in liver, lung, thymus and skin than in brain, kidney, heart and spleen. In skin, highly expressed in keratinocytes. Abundant in lung, liver, spleen, kidney and testis and is also detected in the cerebrum.

It is found in the cytoplasm. The catalysed reaction is L-tyrosyl-[protein] + ATP = O-phospho-L-tyrosyl-[protein] + ADP + H(+). Its function is as follows. Non-receptor tyrosine-protein kinase which phosphorylates DOK1 on tyrosine residues. Also phosphorylates KHDRBS1/SAM68 and VIM on tyrosine residues. Phosphorylation of KHDRBS1 is EGF-dependent. Phosphorylates OTUB1, promoting deubiquitination of RPTOR. This Mus musculus (Mouse) protein is Tyrosine-protein kinase Srms (Srms).